A 357-amino-acid polypeptide reads, in one-letter code: Phosphoribosylformylglycinamidine cyclo-ligase (357 aa).

This sequence belongs to the AIR synthase family.

The protein resides in the cytoplasm. It carries out the reaction 2-formamido-N(1)-(5-O-phospho-beta-D-ribosyl)acetamidine + ATP = 5-amino-1-(5-phospho-beta-D-ribosyl)imidazole + ADP + phosphate + H(+). It functions in the pathway purine metabolism; IMP biosynthesis via de novo pathway; 5-amino-1-(5-phospho-D-ribosyl)imidazole from N(2)-formyl-N(1)-(5-phospho-D-ribosyl)glycinamide: step 2/2. The polypeptide is Phosphoribosylformylglycinamidine cyclo-ligase (Rhizobium etli (strain CIAT 652)).